The chain runs to 538 residues: indole-2-monooxygenase (538 aa).

The helical transmembrane segment at 22-42 threads the bilayer; sequence ALLLAIPFSLLLLPLLLRYLA. Cys481 lines the heme pocket.

Belongs to the cytochrome P450 family. Heme is required as a cofactor.

It localises to the membrane. It catalyses the reaction indole + reduced [NADPH--hemoprotein reductase] + O2 = indolin-2-one + oxidized [NADPH--hemoprotein reductase] + H2O + H(+). It functions in the pathway secondary metabolite biosynthesis; 2,4-dihydroxy-1,4-benzoxazin-3-one biosynthesis; 2,4-dihydroxy-1,4-benzoxazin-3-one from indoleglycerol phosphate: step 2/5. In terms of biological role, catalyzes the conversion of indole to indolin-2-one. This chain is indole-2-monooxygenase (CYP71C4), found in Zea mays (Maize).